Here is a 515-residue protein sequence, read N- to C-terminus: Aldehyde dehydrogenase tropH (515 aa).

238-243 (GSVATG) contacts NAD(+). The Proton acceptor role is filled by glutamate 260. The active-site Nucleophile is cysteine 295.

It belongs to the aldehyde dehydrogenase family.

The enzyme catalyses an aldehyde + NAD(+) + H2O = a carboxylate + NADH + 2 H(+). Its pathway is secondary metabolite biosynthesis. Its function is as follows. Aldehyde dehydrogenase; part of the gene cluster that mediates the biosynthesis of the tropolone class of fungal maleic anhydrides. The pathway begins with the synthesis of 3-methylorcinaldehyde by the non-reducing polyketide synthase (PKS) tropA. 3-methylorcinaldehyde is the substrate for the FAD-dependent monooxygenase tropB to yield a dearomatized hydroxycyclohexadione. The 2-oxoglutarate-dependent dioxygenase tropC then performs the oxidative ring expansion to provide the first tropolone metabolite stipitaldehyde. Trop D converts stipitaldehyde into stipitacetal which is in turn converted to stipitalide by the short-chain dehydrogenase/reductase tropE. The next steps involve tropF, tropG, tropH, tropI and tropJ to form successive tropolone maleic anhydrides including stipitaldehydic, stipitatonic and stipitatic acids. The sequence is that of Aldehyde dehydrogenase tropH from Talaromyces stipitatus (strain ATCC 10500 / CBS 375.48 / QM 6759 / NRRL 1006) (Penicillium stipitatum).